Reading from the N-terminus, the 2144-residue chain is HEAT repeat-containing protein 1 (2144 aa).

At Met-1 the chain carries N-acetylmethionine. Thr-2 bears the N-acetylthreonine; in HEAT repeat-containing protein 1, N-terminally processed mark. A Phosphoserine modification is found at Ser-516. The stretch at 913 to 951 (ASISSPVVTSLLINLGSPVKEVRRAAIQCLQALSGVASP) is one HEAT 1 repeat. Residues 1170-1191 (KAKPLGTVQQKRRQKMQQKKSQ) are disordered. Phosphoserine is present on Ser-1190. The HEAT 2 repeat unit spans residues 1347–1385 (NKTVKMVIPALIQSDSGDSIEVSRNVEEIVVKIISVFVD). At Ser-1492 the chain carries Phosphoserine. 3 HEAT repeats span residues 1594–1632 (LLPT…QNIS), 1730–1770 (IPQL…VVET), and 2100–2138 (IVLL…VLGE).

It belongs to the HEATR1/UTP10 family. Part of the small subunit (SSU) processome, composed of more than 70 proteins and the RNA chaperone small nucleolar RNA (snoRNA) U3. Interacts with MYC; the interaction is required for localization of MYC to the nucleolus.

Its subcellular location is the nucleus. The protein resides in the nucleolus. Its function is as follows. Ribosome biogenesis factor; required for recruitment of Myc to nucleoli. Involved in nucleolar processing of pre-18S ribosomal RNA. Required for optimal pre-ribosomal RNA transcription by RNA polymerase I. Part of the small subunit (SSU) processome, first precursor of the small eukaryotic ribosomal subunit. During the assembly of the SSU processome in the nucleolus, many ribosome biogenesis factors, an RNA chaperone and ribosomal proteins associate with the nascent pre-rRNA and work in concert to generate RNA folding, modifications, rearrangements and cleavage as well as targeted degradation of pre-ribosomal RNA by the RNA exosome. Involved in neuronal-lineage cell proliferation. The polypeptide is HEAT repeat-containing protein 1 (Homo sapiens (Human)).